A 357-amino-acid chain; its full sequence is Prostaglandin D2 receptor-like (357 aa).

At 1–20 (MNESYRCQAATWVERGSSAT) the chain is on the extracellular side. Asn2 carries an N-linked (GlcNAc...) asparagine glycan. A helical membrane pass occupies residues 21–41 (MGGVLFSAGLLGNLLALVLLA). Residues 42–57 (RSGLGSCRPGPLHPPP) are Cytoplasmic-facing. Residues 58–78 (SVFYVLVCGLTVTHLLGKCLI) traverse the membrane as a helical segment. The Extracellular segment spans residues 79–106 (SPMVLAAYAQNRSLKELLPASGNQLCEA). Asn89 carries an N-linked (GlcNAc...) asparagine glycan. Cys104 and Cys182 are oxidised to a cystine. A helical transmembrane segment spans residues 107–127 (FAFLMSFFGLASTLQLLAMAL). The Cytoplasmic portion of the chain corresponds to 128–149 (ECWLSLGHPFFYQRHITARRGV). A helical membrane pass occupies residues 150–170 (LVAPVAGAFSLAFCALPFAGF). At 171–194 (GKFVQYCPGTWCFIQMIHKKRSFS) the chain is on the extracellular side. The helical transmembrane segment at 195-215 (VIGFSVLYSSLMALLVLATVV) threads the bilayer. Over 216–261 (CNLGAMSNLYAMHRRQRHHPRRCSRDRAQSGSDYRHGSPNPLEELD) the chain is Cytoplasmic. Residues 262–282 (HFVLLALTTVLFTMCSLPLIY) form a helical membrane-spanning segment. The Extracellular portion of the chain corresponds to 283–306 (RAYYGAFKLVDRADGDSEDLQALR). Residues 307-327 (FLSVISIVDPWIFIIFRTSVF) traverse the membrane as a helical segment. Residues 328-357 (RMLFHKAFTRPLIYRNWCSHSWQTNMESTL) lie on the Cytoplasmic side of the membrane.

It belongs to the G-protein coupled receptor 1 family. In terms of tissue distribution, strongly expressed in eye and gastrointestinal tract (GIT), moderately in the brain and oviduct and weakly in the epididymis. In the eye, expressed in the epithelium of the iris and ciliary body and in photoreceptor cells of the retina. In the brain, expressed in leptomeninges, choroid plexus and spinal cord (sensory and motor neurons of the dorsal and ventral horns). In the stomach, expressed in the mucous-secreting goblet cells and the columnar epithelium. Expressed in platelets.

It localises to the cell membrane. Receptor for prostaglandin D2 (PGD2). The activity of this receptor is mainly mediated by G(s) proteins that stimulate adenylate cyclase, resulting in an elevation of intracellular cAMP. A mobilization of calcium is also observed, but without formation of inositol 1,4,5-trisphosphate. This chain is Prostaglandin D2 receptor-like (Ptgdrl), found in Rattus norvegicus (Rat).